The chain runs to 347 residues: Protein-glutamate methylesterase/protein-glutamine glutaminase 2 (347 aa).

The region spanning 2 to 119 (RVMIVDDSAV…LGGADLYRKD (118 aa)) is the Response regulatory domain. D52 bears the 4-aspartylphosphate mark. The tract at residues 131 to 153 (AARPAPPQAAPRPTLAPPSSDPA) is disordered. A compositionally biased stretch (pro residues) spans 134–150 (PAPPQAAPRPTLAPPSS). The CheB-type methylesterase domain occupies 152–346 (PAGPIEAVVV…PYIASRARSV (195 aa)). Residues S164, H191, and D288 contribute to the active site.

It belongs to the CheB family. Post-translationally, phosphorylated by CheA. Phosphorylation of the N-terminal regulatory domain activates the methylesterase activity.

It localises to the cytoplasm. The catalysed reaction is [protein]-L-glutamate 5-O-methyl ester + H2O = L-glutamyl-[protein] + methanol + H(+). It catalyses the reaction L-glutaminyl-[protein] + H2O = L-glutamyl-[protein] + NH4(+). In terms of biological role, involved in chemotaxis. Part of a chemotaxis signal transduction system that modulates chemotaxis in response to various stimuli. Catalyzes the demethylation of specific methylglutamate residues introduced into the chemoreceptors (methyl-accepting chemotaxis proteins or MCP) by CheR. Also mediates the irreversible deamidation of specific glutamine residues to glutamic acid. The chain is Protein-glutamate methylesterase/protein-glutamine glutaminase 2 from Caulobacter vibrioides (strain ATCC 19089 / CIP 103742 / CB 15) (Caulobacter crescentus).